A 205-amino-acid chain; its full sequence is GTP cyclohydrolase 1 (205 aa).

The Zn(2+) site is built by Cys-95, His-98, and Cys-166.

The protein belongs to the GTP cyclohydrolase I family. In terms of assembly, toroid-shaped homodecamer, composed of two pentamers of five dimers.

The enzyme catalyses GTP + H2O = 7,8-dihydroneopterin 3'-triphosphate + formate + H(+). It functions in the pathway cofactor biosynthesis; 7,8-dihydroneopterin triphosphate biosynthesis; 7,8-dihydroneopterin triphosphate from GTP: step 1/1. This Maricaulis maris (strain MCS10) (Caulobacter maris) protein is GTP cyclohydrolase 1.